Consider the following 271-residue polypeptide: 4-hydroxy-tetrahydrodipicolinate reductase (271 aa).

Residues Gly-11 to Met-16 and Glu-37 each bind NAD(+). Arg-38 is a binding site for NADP(+). Residues Gly-101–Thr-103 and Ala-125–Met-128 contribute to the NAD(+) site. His-158 serves as the catalytic Proton donor/acceptor. His-159 lines the (S)-2,3,4,5-tetrahydrodipicolinate pocket. Lys-162 acts as the Proton donor in catalysis. Residue Gly-168–Thr-169 coordinates (S)-2,3,4,5-tetrahydrodipicolinate.

This sequence belongs to the DapB family.

It is found in the cytoplasm. The catalysed reaction is (S)-2,3,4,5-tetrahydrodipicolinate + NAD(+) + H2O = (2S,4S)-4-hydroxy-2,3,4,5-tetrahydrodipicolinate + NADH + H(+). It carries out the reaction (S)-2,3,4,5-tetrahydrodipicolinate + NADP(+) + H2O = (2S,4S)-4-hydroxy-2,3,4,5-tetrahydrodipicolinate + NADPH + H(+). It participates in amino-acid biosynthesis; L-lysine biosynthesis via DAP pathway; (S)-tetrahydrodipicolinate from L-aspartate: step 4/4. Its function is as follows. Catalyzes the conversion of 4-hydroxy-tetrahydrodipicolinate (HTPA) to tetrahydrodipicolinate. This Shewanella halifaxensis (strain HAW-EB4) protein is 4-hydroxy-tetrahydrodipicolinate reductase.